A 155-amino-acid chain; its full sequence is Ribosome maturation factor RimP (155 aa).

Belongs to the RimP family.

It localises to the cytoplasm. Functionally, required for maturation of 30S ribosomal subunits. The protein is Ribosome maturation factor RimP of Prochlorococcus marinus subsp. pastoris (strain CCMP1986 / NIES-2087 / MED4).